We begin with the raw amino-acid sequence, 406 residues long: Phosphorylase b kinase gamma catalytic chain, liver/testis isoform (406 aa).

In terms of domain architecture, Protein kinase spans 24-291; sequence YDPKDIIGRG…AEQALQHPFF (268 aa). ATP contacts are provided by residues 30–38 and K53; that span reads IGRGVSSVV. D153 acts as the Proton acceptor in catalysis. The segment at 306–330 is calmodulin-binding (domain-N); it reads QRFRVAVWTILAAGRVALSSHRLRP. Residues 346–370 form a calmodulin-binding (domain-C) region; it reads VRRLIDNCAFRLYGHWVKKGEQQNR.

Belongs to the protein kinase superfamily. CAMK Ser/Thr protein kinase family. In terms of assembly, hexadecamer of 4 heterotetramers, each composed of alpha, beta, gamma, and delta subunits. Alpha (PHKA1 or PHKA2) and beta (PHKB) are regulatory subunits, gamma (PHKG1 or PHKG2) is the catalytic subunit, and delta is calmodulin.

It catalyses the reaction 2 ATP + phosphorylase b = 2 ADP + phosphorylase a.. Functionally, catalytic subunit of the phosphorylase b kinase (PHK), which mediates the neural and hormonal regulation of glycogen breakdown (glycogenolysis) by phosphorylating and thereby activating glycogen phosphorylase. May regulate glycogeneolysis in the testis. In vitro, phosphorylates PYGM. In Rattus norvegicus (Rat), this protein is Phosphorylase b kinase gamma catalytic chain, liver/testis isoform (Phkg2).